A 452-amino-acid chain; its full sequence is Phosphoglucosamine mutase (452 aa).

The active-site Phosphoserine intermediate is S103. Mg(2+)-binding residues include S103, D243, D245, and D247. S103 is subject to Phosphoserine.

The protein belongs to the phosphohexose mutase family. It depends on Mg(2+) as a cofactor. Post-translationally, activated by phosphorylation.

The catalysed reaction is alpha-D-glucosamine 1-phosphate = D-glucosamine 6-phosphate. Functionally, catalyzes the conversion of glucosamine-6-phosphate to glucosamine-1-phosphate. In Lactobacillus acidophilus (strain ATCC 700396 / NCK56 / N2 / NCFM), this protein is Phosphoglucosamine mutase.